We begin with the raw amino-acid sequence, 466 residues long: Signal recognition particle 54 kDa protein (466 aa).

GTP is bound by residues 104 to 111, 184 to 188, and 242 to 245; these read GLQGSGKT, DTAGR, and TKLD. Residues 444 to 466 are disordered; the sequence is MQQGGGGGGGGGGGLGGMGPFGD. The span at 446–466 shows a compositional bias: gly residues; that stretch reads QGGGGGGGGGGGLGGMGPFGD.

The protein belongs to the GTP-binding SRP family. SRP54 subfamily. In terms of assembly, part of the signal recognition particle protein translocation system, which is composed of SRP and FtsY. Archaeal SRP consists of a 7S RNA molecule of 300 nucleotides and two protein subunits: SRP54 and SRP19.

The protein localises to the cytoplasm. It carries out the reaction GTP + H2O = GDP + phosphate + H(+). Its function is as follows. Involved in targeting and insertion of nascent membrane proteins into the cytoplasmic membrane. Binds to the hydrophobic signal sequence of the ribosome-nascent chain (RNC) as it emerges from the ribosomes. The SRP-RNC complex is then targeted to the cytoplasmic membrane where it interacts with the SRP receptor FtsY. The polypeptide is Signal recognition particle 54 kDa protein (Natronomonas pharaonis (strain ATCC 35678 / DSM 2160 / CIP 103997 / JCM 8858 / NBRC 14720 / NCIMB 2260 / Gabara) (Halobacterium pharaonis)).